Here is a 149-residue protein sequence, read N- to C-terminus: Large ribosomal subunit protein bL9 (149 aa).

This sequence belongs to the bacterial ribosomal protein bL9 family.

Binds to the 23S rRNA. This is Large ribosomal subunit protein bL9 from Citrobacter koseri (strain ATCC BAA-895 / CDC 4225-83 / SGSC4696).